We begin with the raw amino-acid sequence, 229 residues long: Flavin-dependent thymidylate synthase (229 aa).

The ThyX domain maps to 1–217; sequence MEFKVLDKGF…PWTFESFLKF (217 aa). FAD contacts are provided by residues Thr55, 78 to 80, and Glu86; that span reads RHR. DUMP contacts are provided by residues 75–78, 86–90, and Arg156; these read QWFR and EASLR. The ThyX motif signature appears at 78-88; the sequence is RHRIGSFNEAS. FAD is bound by residues 172 to 174 and Asn178; that span reads NAR. Residue Arg183 participates in dUMP binding. Arg183 (involved in ionization of N3 of dUMP, leading to its activation) is an active-site residue.

The protein belongs to the thymidylate synthase ThyX family. In terms of assembly, homotetramer. The cofactor is FAD.

The enzyme catalyses dUMP + (6R)-5,10-methylene-5,6,7,8-tetrahydrofolate + NADPH + H(+) = dTMP + (6S)-5,6,7,8-tetrahydrofolate + NADP(+). It participates in pyrimidine metabolism; dTTP biosynthesis. Its function is as follows. Catalyzes the reductive methylation of 2'-deoxyuridine-5'-monophosphate (dUMP) to 2'-deoxythymidine-5'-monophosphate (dTMP) while utilizing 5,10-methylenetetrahydrofolate (mTHF) as the methyl donor, and NADPH and FADH(2) as the reductant. The protein is Flavin-dependent thymidylate synthase of Thermosipho melanesiensis (strain DSM 12029 / CIP 104789 / BI429).